Here is a 72-residue protein sequence, read N- to C-terminus: Delta-actitoxin-Avd2b 1 (72 aa).

The signal sequence occupies residues 1-21; it reads MMNRLLVFLMLGAAFMLVVSA. Positions 22-42 are excised as a propeptide; it reads NDAYGDEPAFKDLNQGDESLG. 3 disulfides stabilise this stretch: Cys-47–Cys-62, Cys-48–Cys-56, and Cys-50–Cys-67.

It belongs to the sea anemone short toxin (type III) family.

The protein resides in the secreted. The protein localises to the nematocyst. In terms of biological role, voltage-gated sodium channel (Nav) inhibitor. 1 uM completely inhibits insect voltage-gated sodium channel inactivation (DmNav1 from D.melanogaster). This is Delta-actitoxin-Avd2b 1 from Anemonia viridis (Snakelocks anemone).